The primary structure comprises 313 residues: MEKSQKQVTRPSNSRREYSKEIPIDLLIEIFSRLSTGDIARCRCVSKIWSSVPRLRDFTELFLKISSARPRILFTFLHNGMVPSYDNEIHAPVRGFLCSKASVYNPSTGECAYPYLELLGLWDILPVDAENLAKKVCVPKVLLASEDFACRVSTLGTEEVCWRMIQCSLPHRPFRDEICIDGVLYYLANCKGKLGILWPVPSGDQSHEVTRSFVLRILEDANKLIWSRTVYTLSFNWKKLVNKSLYIVGMTSGGEIVLSTRHLNYPFYIVYYNPVNNTAAKNEIQFGNIANKKAENSRIYTFIDHVENVEHMD.

One can recognise an F-box domain in the interval 16–65 (REYSKEIPIDLLIEIFSRLSTGDIARCRCVSKIWSSVPRLRDFTELFLKI).

In terms of assembly, interacts with SGS3 in cytoplasmic granules.

It is found in the cytoplasmic granule. The catalysed reaction is S-ubiquitinyl-[E2 ubiquitin-conjugating enzyme]-L-cysteine + [acceptor protein]-L-lysine = [E2 ubiquitin-conjugating enzyme]-L-cysteine + N(6)-ubiquitinyl-[acceptor protein]-L-lysine.. It functions in the pathway protein degradation; proteasomal ubiquitin-dependent pathway. The protein operates within protein modification; protein ubiquitination. Its function is as follows. E3 ubiquitin-protein ligase which triggers the ubiquitination and subsequent degradation of SGS3 in response to heat. Involved in the mechanisms necessary for quick response to heat and subsequent heritable transgenerational memory of heat acclimation (global warming) such as early flowering and attenuated immunity; this process includes epigenetic regulation as well as post-transcriptional gene silencing (PTGS). In response to heat, HSFA2 is activated and promotes the expression of REF6 which in turn derepresses HSFA2, thus establishing an inheritable feedback loop able to trigger SGIP1 and subsequent SGIP1-mediated SGS3 degradation; this prevents the biosynthesis of trans-acting siRNA (tasiRNA) and leads to the release of HTT5, which drives early flowering but attenuates immunity. This chain is E3 ubiquitin-protein ligase SGIP1, found in Arabidopsis thaliana (Mouse-ear cress).